The chain runs to 124 residues: MPAKQTSGKGAKKAGKAKGRPAGASKTRRRKRKESYGIYIYKVLKQVHPDTGISSKAMSIMNSFVNDVFERIAGEASRLAHYNKKSTISSREVQTAVRLLLPGELAKHAVSEGTKAVTKYTTSK.

A disordered region spans residues 1–32 (MPAKQTSGKGAKKAGKAKGRPAGASKTRRRKR). A compositionally biased stretch (basic residues) spans 10–19 (GAKKAGKAKG). Ser-111 carries O-linked (GlcNAc) serine glycosylation. A Glycyl lysine isopeptide (Lys-Gly) (interchain with G-Cter in ubiquitin) cross-link involves residue Lys-119.

It belongs to the histone H2B family. As to quaternary structure, the nucleosome is a histone octamer containing two molecules each of H2A, H2B, H3 and H4 assembled in one H3-H4 heterotetramer and two H2A-H2B heterodimers. The octamer wraps approximately 147 bp of DNA. In terms of processing, monoubiquitination of Lys-119 gives a specific tag for epigenetic transcriptional activation and is also prerequisite for histone H3 'Lys-4' and 'Lys-79' methylation. Post-translationally, glcNAcylation at Ser-111 promotes monoubiquitination of Lys-119. It fluctuates in response to extracellular glucose, and associates with transcribed genes.

The protein localises to the nucleus. It is found in the chromosome. Core component of nucleosome. Nucleosomes wrap and compact DNA into chromatin, limiting DNA accessibility to the cellular machineries which require DNA as a template. Histones thereby play a central role in transcription regulation, DNA repair, DNA replication and chromosomal stability. DNA accessibility is regulated via a complex set of post-translational modifications of histones, also called histone code, and nucleosome remodeling. This chain is Late histone H2B.2.1, found in Psammechinus miliaris (Green sea urchin).